The chain runs to 302 residues: MSPAAELSPTPFGRLLTAMVTPFDAEGAVDLALAGRLARHLVDEGSDGLVVCGTTGESPTLSWDEQSQLLEAVRQAVGPGVPVLAGTGSNCTQEAVKATREAAAAGADGALVVTPYYNKPPQEGLEAHFRAIAEAAPELPLMLYNIPGRTGCSMEPATVARLMDCSNIVSFKAASGTTEEVTALRLACGAKLAIYSGDDGLVLPMLSVGAVGVVSVASHLVGRRMRAMVEAYLSGQPAVALGHHEQLIPLFKALFATTNPIPVKAALELSGWPVGSPRSPLLPLDPAMRAALSDTLAALRPT.

Threonine 55 lines the pyruvate pocket. Residue tyrosine 144 is the Proton donor/acceptor of the active site. Lysine 172 acts as the Schiff-base intermediate with substrate in catalysis. Valine 214 provides a ligand contact to pyruvate.

Belongs to the DapA family. As to quaternary structure, homotetramer; dimer of dimers.

The protein resides in the cytoplasm. It carries out the reaction L-aspartate 4-semialdehyde + pyruvate = (2S,4S)-4-hydroxy-2,3,4,5-tetrahydrodipicolinate + H2O + H(+). It participates in amino-acid biosynthesis; L-lysine biosynthesis via DAP pathway; (S)-tetrahydrodipicolinate from L-aspartate: step 3/4. Functionally, catalyzes the condensation of (S)-aspartate-beta-semialdehyde [(S)-ASA] and pyruvate to 4-hydroxy-tetrahydrodipicolinate (HTPA). This chain is 4-hydroxy-tetrahydrodipicolinate synthase, found in Synechococcus sp. (strain WH7803).